Here is a 760-residue protein sequence, read N- to C-terminus: Rho GTPase-activating protein 26 (760 aa).

Residues 7–262 (EFSECCLDSP…MKENPHEHKN (256 aa)) enclose the BAR domain. The 105-residue stretch at 265-369 (PYTMEGYLYV…WMEAMDGREP (105 aa)) folds into the PH domain. The Rho-GAP domain occupies 383-568 (AQLDSIGFSI…ILIENHEKIF (186 aa)). Disordered stretches follow at residues 571–617 (VPET…ESRN) and 658–701 (PNRP…SPIS). Over residues 605-617 (HTAQPNEKQESRN) the composition is skewed to polar residues. The span at 674-701 (LSPSWPMFSAPSSPMPTSSTSSDSSPIS) shows a compositional bias: low complexity. The region spanning 702–760 (SPLRKARALYACKAEHDSELSFTAGTVFDNVHPSQEPGWLEGTLNGKTGLIPENYVEFL) is the SH3 domain.

As to quaternary structure, binds to the C-terminus of PTK2/FAK1. Detected in embryonic brain and liver, and at low levels in embryonic eye, heart, lung, intestine and skeletal muscle.

Its subcellular location is the cell junction. The protein resides in the focal adhesion. It localises to the cytoplasm. It is found in the cytoskeleton. The protein localises to the endosome membrane. In terms of biological role, GTPase-activating protein for RHOA and CDC42. May be involved in the regulation of neosynthesized protein export through a Rab-endososomal dependent export route. The polypeptide is Rho GTPase-activating protein 26 (ARHGAP26) (Gallus gallus (Chicken)).